Consider the following 360-residue polypeptide: Holliday junction branch migration complex subunit RuvB (360 aa).

A large ATPase domain (RuvB-L) region spans residues 4 to 196 (HEEDLDQAEE…FGFTAHLEFY (193 aa)). ATP-binding positions include L35, R36, G77, K80, T81, T82, 143-145 (EDF), R186, Y196, and R233. T81 contacts Mg(2+). Residues 197–267 (EPDELDLIVQ…VAQDALDLYE (71 aa)) are small ATPAse domain (RuvB-S). Residues 270–360 (QLGLDRLDRG…PESDPPLFED (91 aa)) are head domain (RuvB-H). The DNA site is built by R306, R325, and R330.

It belongs to the RuvB family. In terms of assembly, homohexamer. Forms an RuvA(8)-RuvB(12)-Holliday junction (HJ) complex. HJ DNA is sandwiched between 2 RuvA tetramers; dsDNA enters through RuvA and exits via RuvB. An RuvB hexamer assembles on each DNA strand where it exits the tetramer. Each RuvB hexamer is contacted by two RuvA subunits (via domain III) on 2 adjacent RuvB subunits; this complex drives branch migration. In the full resolvosome a probable DNA-RuvA(4)-RuvB(12)-RuvC(2) complex forms which resolves the HJ.

It is found in the cytoplasm. It carries out the reaction ATP + H2O = ADP + phosphate + H(+). Functionally, the RuvA-RuvB-RuvC complex processes Holliday junction (HJ) DNA during genetic recombination and DNA repair, while the RuvA-RuvB complex plays an important role in the rescue of blocked DNA replication forks via replication fork reversal (RFR). RuvA specifically binds to HJ cruciform DNA, conferring on it an open structure. The RuvB hexamer acts as an ATP-dependent pump, pulling dsDNA into and through the RuvAB complex. RuvB forms 2 homohexamers on either side of HJ DNA bound by 1 or 2 RuvA tetramers; 4 subunits per hexamer contact DNA at a time. Coordinated motions by a converter formed by DNA-disengaged RuvB subunits stimulates ATP hydrolysis and nucleotide exchange. Immobilization of the converter enables RuvB to convert the ATP-contained energy into a lever motion, pulling 2 nucleotides of DNA out of the RuvA tetramer per ATP hydrolyzed, thus driving DNA branch migration. The RuvB motors rotate together with the DNA substrate, which together with the progressing nucleotide cycle form the mechanistic basis for DNA recombination by continuous HJ branch migration. Branch migration allows RuvC to scan DNA until it finds its consensus sequence, where it cleaves and resolves cruciform DNA. The protein is Holliday junction branch migration complex subunit RuvB of Nocardioides sp. (strain ATCC BAA-499 / JS614).